We begin with the raw amino-acid sequence, 241 residues long: tRNA (guanine-N(7)-)-methyltransferase (241 aa).

Glu-71, Glu-96, Asp-123, and Asp-146 together coordinate S-adenosyl-L-methionine. The active site involves Asp-146. Substrate contacts are provided by residues Lys-150, Asp-182, and 219–222; that span reads TKFE.

Belongs to the class I-like SAM-binding methyltransferase superfamily. TrmB family.

The enzyme catalyses guanosine(46) in tRNA + S-adenosyl-L-methionine = N(7)-methylguanosine(46) in tRNA + S-adenosyl-L-homocysteine. It functions in the pathway tRNA modification; N(7)-methylguanine-tRNA biosynthesis. In terms of biological role, catalyzes the formation of N(7)-methylguanine at position 46 (m7G46) in tRNA. The polypeptide is tRNA (guanine-N(7)-)-methyltransferase (Pseudoalteromonas translucida (strain TAC 125)).